The primary structure comprises 426 residues: Glutamyl-tRNA reductase (426 aa).

Residues 49–52 (TCNR), Ser109, 114–116 (EGQ), and Gln120 contribute to the substrate site. Residue Cys50 is the Nucleophile of the active site. 189–194 (GAGETG) contributes to the NADP(+) binding site.

The protein belongs to the glutamyl-tRNA reductase family. In terms of assembly, homodimer.

The catalysed reaction is (S)-4-amino-5-oxopentanoate + tRNA(Glu) + NADP(+) = L-glutamyl-tRNA(Glu) + NADPH + H(+). Its pathway is porphyrin-containing compound metabolism; protoporphyrin-IX biosynthesis; 5-aminolevulinate from L-glutamyl-tRNA(Glu): step 1/2. It functions in the pathway porphyrin-containing compound metabolism; chlorophyll biosynthesis. Its function is as follows. Catalyzes the NADPH-dependent reduction of glutamyl-tRNA(Glu) to glutamate 1-semialdehyde (GSA). This Chlorobium chlorochromatii (strain CaD3) protein is Glutamyl-tRNA reductase.